Here is an 817-residue protein sequence, read N- to C-terminus: Verprolin (817 aa).

Pro residues predominate over residues 1–15 (MAGAPAPPPPPPPPA). Positions 1–752 (MAGAPAPPPP…THTNQPDVDV (752 aa)) are disordered. Positions 30–47 (GRDALLGDIRKGMKLKKA) constitute a WH2 1 domain. The span at 37–51 (DIRKGMKLKKAETND) shows a compositional bias: basic and acidic residues. A compositionally biased stretch (low complexity) spans 62–79 (VSSASGSSGTVSSKGPSM). In terms of domain architecture, WH2 2 spans 87–106 (MGAPQLGDILAGGIPKLKHI). An N-linked (GlcNAc...) asparagine glycan is attached at Asn109. Pro residues predominate over residues 119–180 (SAPPIPGAVP…VPSSPAPPLP (62 aa)). Residue Asn212 is glycosylated (N-linked (GlcNAc...) asparagine). The span at 236 to 245 (PQAPPPPPTP) shows a compositional bias: pro residues. Polar residues predominate over residues 254–265 (IKPTDNAVSPPS). The segment covering 306–335 (SQPPLPSSAPPIPTSHAPPLPPTAPPPPSL) has biased composition (pro residues). Residues 336–348 (PNVTSAPKKATSA) are compositionally biased toward low complexity. A glycan (N-linked (GlcNAc...) asparagine) is linked at Asn337. Residues 372 to 382 (PVPPTLAPPLP) are compositionally biased toward pro residues. Asn383 is a glycosylation site (N-linked (GlcNAc...) asparagine). Residues 383-395 (NTTSVPPNKASSM) are compositionally biased toward low complexity. Over residues 396–407 (PAPPPPPPPPPG) the composition is skewed to pro residues. The span at 408-422 (AFSTSSALSASSIPL) shows a compositional bias: low complexity. Over residues 423 to 432 (APLPPPPPPS) the composition is skewed to pro residues. Residues 447-469 (LTTNKPSASSKQSKISSSSSSSA) are compositionally biased toward low complexity. A compositionally biased stretch (basic and acidic residues) spans 502 to 516 (DKQEDVIGSSKDDNV). The span at 518-534 (PSPISPSINPPKQSSQN) shows a compositional bias: low complexity. Phosphoserine is present on Ser519. Over residues 557–579 (APPPHTDAMAPPLPPSAPPPPIT) the composition is skewed to pro residues. The segment covering 588–597 (GDDHTNDKSE) has biased composition (basic and acidic residues). Residues 649-661 (PPSPPVAAAPPLP) show a composition bias toward pro residues. Residues 713–737 (MDTGTSNSPSKNLKQRLFSTGGSTL) show a composition bias toward polar residues. Position 762 is a phosphoserine (Ser762). 2 N-linked (GlcNAc...) asparagine glycosylation sites follow: Asn784 and Asn796. The interval 786–806 (SQMPKPRPFQNKTKLYPSGKG) is disordered.

This sequence belongs to the verprolin family. N-glycosylated.

It is found in the cytoplasm. The protein localises to the cytoskeleton. Involved in cytoskeletal organization and cellular growth. May exert its effects on the cytoskeleton directly, or indirectly via proline-binding proteins (e.g. profilin) or proteins possessing SH3 domains. This chain is Verprolin (VRP1), found in Saccharomyces cerevisiae (strain ATCC 204508 / S288c) (Baker's yeast).